Reading from the N-terminus, the 361-residue chain is Queuine tRNA-ribosyltransferase (361 aa).

Residue aspartate 92 is the Proton acceptor of the active site. Substrate-binding positions include 92–96 (DSGGF), aspartate 146, glutamine 189, and glycine 216. The RNA binding stretch occupies residues 247–253 (GVGKPAD). The Nucleophile role is filled by aspartate 266. The segment at 271-275 (TRSGR) is RNA binding; important for wobble base 34 recognition. The Zn(2+) site is built by cysteine 304, cysteine 306, cysteine 309, and histidine 335.

It belongs to the queuine tRNA-ribosyltransferase family. In terms of assembly, homodimer. Within each dimer, one monomer is responsible for RNA recognition and catalysis, while the other monomer binds to the replacement base PreQ1. It depends on Zn(2+) as a cofactor.

It carries out the reaction 7-aminomethyl-7-carbaguanine + guanosine(34) in tRNA = 7-aminomethyl-7-carbaguanosine(34) in tRNA + guanine. The protein operates within tRNA modification; tRNA-queuosine biosynthesis. In terms of biological role, catalyzes the base-exchange of a guanine (G) residue with the queuine precursor 7-aminomethyl-7-deazaguanine (PreQ1) at position 34 (anticodon wobble position) in tRNAs with GU(N) anticodons (tRNA-Asp, -Asn, -His and -Tyr). Catalysis occurs through a double-displacement mechanism. The nucleophile active site attacks the C1' of nucleotide 34 to detach the guanine base from the RNA, forming a covalent enzyme-RNA intermediate. The proton acceptor active site deprotonates the incoming PreQ1, allowing a nucleophilic attack on the C1' of the ribose to form the product. After dissociation, two additional enzymatic reactions on the tRNA convert PreQ1 to queuine (Q), resulting in the hypermodified nucleoside queuosine (7-(((4,5-cis-dihydroxy-2-cyclopenten-1-yl)amino)methyl)-7-deazaguanosine). This chain is Queuine tRNA-ribosyltransferase, found in Rickettsia rickettsii (strain Iowa).